Consider the following 406-residue polypeptide: Tyrosine--tRNA ligase (406 aa).

Position 35 (Tyr35) interacts with L-tyrosine. Positions 40-49 match the 'HIGH' region motif; the sequence is PTADSLHVGH. Positions 168 and 172 each coordinate L-tyrosine. The short motif at 228 to 232 is the 'KMSKS' region element; that stretch reads KMGKT. Lys231 lines the ATP pocket. Residues 340–404 enclose the S4 RNA-binding domain; the sequence is AELLDILVEA…RGKKNYNKIV (65 aa).

It belongs to the class-I aminoacyl-tRNA synthetase family. TyrS type 1 subfamily. Homodimer.

It localises to the cytoplasm. It carries out the reaction tRNA(Tyr) + L-tyrosine + ATP = L-tyrosyl-tRNA(Tyr) + AMP + diphosphate + H(+). In terms of biological role, catalyzes the attachment of tyrosine to tRNA(Tyr) in a two-step reaction: tyrosine is first activated by ATP to form Tyr-AMP and then transferred to the acceptor end of tRNA(Tyr). In Clostridium perfringens (strain 13 / Type A), this protein is Tyrosine--tRNA ligase.